The sequence spans 126 residues: C-X-C motif chemokine 9 (126 aa).

The first 21 residues, 1–21 (MKSAVLFLLGIIFLEQCGVRG), serve as a signal peptide directing secretion. Intrachain disulfides connect Cys30/Cys57 and Cys32/Cys73. Asn58 carries N-linked (GlcNAc...) asparagine glycosylation. The segment at 91–126 (KISQKKKQKRGKKHQKNMKNRKPKTPQSRRRSRKTT) is disordered. Residues 93–126 (SQKKKQKRGKKHQKNMKNRKPKTPQSRRRSRKTT) show a composition bias toward basic residues.

The protein belongs to the intercrine alpha (chemokine CxC) family.

Its subcellular location is the secreted. May be a cytokine that affects the growth, movement, or activation state of cells that participate in immune and inflammatory response. The polypeptide is C-X-C motif chemokine 9 (Cxcl9) (Mus musculus (Mouse)).